Here is a 94-residue protein sequence, read N- to C-terminus: DNA-binding protein HU (94 aa).

The tract at residues 56-94 is disordered; it reads QKGKEGKVPGSDKTYKTEDKRVPKFKPGKTLKQKVEEGK. The span at 68–77 shows a compositional bias: basic and acidic residues; that stretch reads KTYKTEDKRV. A compositionally biased stretch (basic residues) spans 78–87; it reads PKFKPGKTLK.

Belongs to the bacterial histone-like protein family. As to quaternary structure, homodimer.

In terms of biological role, histone-like DNA-binding protein which is capable of wrapping DNA to stabilize it, and thus to prevent its denaturation under extreme environmental conditions. This chain is DNA-binding protein HU (hup), found in Helicobacter pylori (strain ATCC 700392 / 26695) (Campylobacter pylori).